A 118-amino-acid chain; its full sequence is UPF0342 protein ABC1519 (118 aa).

Belongs to the UPF0342 family.

This chain is UPF0342 protein ABC1519, found in Shouchella clausii (strain KSM-K16) (Alkalihalobacillus clausii).